Here is an 835-residue protein sequence, read N- to C-terminus: Peptide transporter family 1 (835 aa).

A run of 11 helical transmembrane segments spans residues 86 to 106, 113 to 133, 150 to 170, 183 to 203, 222 to 242, 325 to 345, 368 to 388, 401 to 421, 697 to 717, 738 to 758, and 765 to 785; these read IFFN…SIVA, FWTI…LALA, GLLI…AFGG, LFFS…TFIS, FGIP…GSFW, MFLP…VWLI, LNAV…YPVA, VTGG…QLQV, ILWQ…FSIT, WLLT…LNLF, and FFVY…LSIF. Positions 814–835 are disordered; sequence PRYSIDNKGFHPDEKDTFDMHF. The segment covering 821 to 835 has biased composition (basic and acidic residues); it reads KGFHPDEKDTFDMHF.

It belongs to the major facilitator superfamily. Proton-dependent oligopeptide transporter (POT/PTR) (TC 2.A.17) family. Expressed specifically in the intestine.

The protein resides in the apical cell membrane. Low-affinity peptide transporter that is necessary for proton-dependent uptake of di- or tripeptides, and to a minor extent tetrapeptides, in the intestine. Transport is independent of sodium and chloride ions. Controls the uptake of dietary fatty acids, plays a role in fatty acid synthesis and is responsible for dipeptide-induced acidification of the intestine. Regulates cellular pH differences together with the antiporter protein, nhx-2. Amino acid uptake and absorption levels influence the insulin signaling/daf-2 and let-363/TOR pathways, subsequently affecting the stress response and longevity of the organism. It is required for the uptake of the L-enantiomers of various amino acids, including L-glutamate. In response to the availability of amino acid nutrients, may play a role in promoting reproduction and fertility. The chain is Peptide transporter family 1 from Caenorhabditis elegans.